Consider the following 344-residue polypeptide: Protein L-Myc-1-B (344 aa).

2 stretches are compositionally biased toward polar residues: residues 104-113 (GSPRVTNTQK) and 213-223 (NTMSPQHNFHS). Disordered regions lie at residues 104 to 162 (GSPR…EDEI) and 208 to 271 (LPPE…YLER). Positions 259 to 270 (DLAKRKNHNYLE) are enriched in basic and acidic residues. The bHLH domain maps to 261–313 (AKRKNHNYLERKRRNDLRSRFLALREEVPSLSRSTKTPKVVVLSKATEFLKGL). Residues 313-341 (LVIQEQQLTAEKLKLWSRHQQLLRRISQL) are leucine-zipper.

Efficient DNA binding requires dimerization with another bHLH protein. Binds DNA as a heterodimer with MAX. High levels in oocytes, modest levels in kidney and low levels in spleen.

Its subcellular location is the nucleus. This Xenopus laevis (African clawed frog) protein is Protein L-Myc-1-B (mycl1-b).